The following is a 1040-amino-acid chain: Multidrug resistance protein MdtB (1040 aa).

Helical transmembrane passes span 16 to 36 (FIMR…AGII), 347 to 367 (LMMA…NIPA), 369 to 389 (IIPG…MVFL), 396 to 416 (LTLM…IVVI), 440 to 460 (IGFT…PLLF), 472 to 492 (FAIT…TLTP), 537 to 557 (WLTL…WVFI), 863 to 883 (LGST…VLGI), 888 to 908 (FIHP…ALLA), 911 to 931 (IAGS…IGIV), 968 to 988 (ILMT…STGV), and 998 to 1018 (IGMV…TPVI).

It belongs to the resistance-nodulation-cell division (RND) (TC 2.A.6) family. MdtB subfamily. Part of a tripartite efflux system composed of MdtA, MdtB and MdtC. MdtB forms a heteromultimer with MdtC.

It localises to the cell inner membrane. Its function is as follows. The MdtABC tripartite complex confers resistance against novobiocin and deoxycholate. The sequence is that of Multidrug resistance protein MdtB from Escherichia coli (strain 55989 / EAEC).